The sequence spans 207 residues: Ribonuclease HII (207 aa).

Residues 17-207 (RIVAGVDEVG…SFKPLAAFVD (191 aa)) enclose the RNase H type-2 domain. Asp23, Glu24, and Asp120 together coordinate a divalent metal cation.

Belongs to the RNase HII family. The cofactor is Mn(2+). Mg(2+) is required as a cofactor.

It is found in the cytoplasm. The enzyme catalyses Endonucleolytic cleavage to 5'-phosphomonoester.. Functionally, endonuclease that specifically degrades the RNA of RNA-DNA hybrids. The chain is Ribonuclease HII from Herpetosiphon aurantiacus (strain ATCC 23779 / DSM 785 / 114-95).